A 124-amino-acid chain; its full sequence is Fluoride-specific ion channel FluC (124 aa).

Helical transmembrane passes span 4–24, 35–55, 67–87, and 96–116; these read IVLL…LAGL, LGTF…WGVC, VVLL…TFES, and WLAF…LLWL. Na(+)-binding residues include Gly75 and Thr78.

Belongs to the fluoride channel Fluc/FEX (TC 1.A.43) family.

The protein localises to the cell inner membrane. The enzyme catalyses fluoride(in) = fluoride(out). Its activity is regulated as follows. Na(+) is not transported, but it plays an essential structural role and its presence is essential for fluoride channel function. Functionally, fluoride-specific ion channel. Important for reducing fluoride concentration in the cell, thus reducing its toxicity. The sequence is that of Fluoride-specific ion channel FluC from Nitratidesulfovibrio vulgaris (strain DSM 19637 / Miyazaki F) (Desulfovibrio vulgaris).